We begin with the raw amino-acid sequence, 51 residues long: Sec-independent protein translocase protein TatA (51 aa).

Residues 1–21 (MGMSFSHLLIILLIIFVLFGA) form a helical membrane-spanning segment.

The protein belongs to the TatA/E family. As to quaternary structure, the Tat system comprises two distinct complexes: a TatABC complex, containing multiple copies of TatA, TatB and TatC subunits, and a separate TatA complex, containing only TatA subunits. Substrates initially bind to the TatABC complex, which probably triggers association of the separate TatA complex to form the active translocon.

It is found in the cell inner membrane. Functionally, part of the twin-arginine translocation (Tat) system that transports large folded proteins containing a characteristic twin-arginine motif in their signal peptide across membranes. TatA could form the protein-conducting channel of the Tat system. This is Sec-independent protein translocase protein TatA from Rickettsia bellii (strain RML369-C).